The primary structure comprises 634 residues: Microtubule-associated protein 70-2 (634 aa).

Residues 1–57 (MSDVSGDGDLSATVTEHEVTPQPPVSSATYPSLTVSASYKESSGGKSSSKRRPIRPS) form a disordered region. Polar residues predominate over residues 25–35 (VSSATYPSLTV). Low complexity predominate over residues 36 to 47 (SASYKESSGGKS). Positions 74 to 392 (DPVKVELNRL…LRLKVLEETL (319 aa)) form a coiled coil. The required for targeting to microtubules stretch occupies residues 258 to 494 (ILDRMHRQKV…YSFNKATDDS (237 aa)). Composition is skewed to polar residues over residues 393–417 (RGTS…SRRQ) and 443–464 (MRHS…TSKS). 2 disordered regions span residues 393–526 (RGTS…SVPG) and 594–634 (VEKD…KSTQ). Residues 532–601 (LQKEVVSLRK…MRVEKDQDAR (70 aa)) are a coiled coil. The span at 605 to 616 (FSNSKSPSNTAQ) shows a compositional bias: polar residues.

The protein belongs to the MAP70 family.

Its subcellular location is the cytoplasm. The protein resides in the cytoskeleton. Its function is as follows. Plant-specific protein that interact with microtubules. The chain is Microtubule-associated protein 70-2 (MAP70.2) from Arabidopsis thaliana (Mouse-ear cress).